The primary structure comprises 1002 residues: Inversin-B (1002 aa).

16 ANK repeats span residues 9-39 (SLAS…VIDQ), 43-72 (LGRT…KVNR), 76-105 (SGRT…DCTH), 109-140 (CDIT…QVDA), 144-173 (RKQT…NIGI), 177-209 (EGKI…TESL), 216-246 (EGRT…NVAP), 250-279 (LFRT…SPNI), 284-313 (QGAT…VRDE), 317-346 (EGRT…KLEV), 352-381 (YGGT…QADA), 385-414 (MKHT…KVHL), 418-447 (DGRS…NPDA), 451-480 (EGRT…DPNI), 484-513 (NGRT…FPNQ), and 519-549 (ERYT…SIAA). The short motif at 486-494 (RTALHWSCN) is the D-box 1 element. In terms of domain architecture, IQ 1 spans 551–580 (QDIAAFKIQAVYKGHKVRRAFQERKNLLMK). Composition is skewed to basic and acidic residues over residues 586 to 599 (KGAA…ENRQ), 609 to 621 (KQKD…RQNK), and 643 to 656 (AEDR…ENLE). Disordered stretches follow at residues 586–804 (KGAA…KGRR) and 862–886 (SAKT…SSSA). Polar residues-rich tracts occupy residues 670 to 680 (QRITAQIQSSP) and 687 to 706 (NSIQ…SSPL). Basic and acidic residues-rich tracts occupy residues 733–763 (HQME…EERK) and 770–796 (QSSD…EGKK). Positions 959 to 967 (RKQLFQRKN) match the D-box 2 motif. The IQ 2 domain maps to 966–995 (KNHAATVIQKAWRTYWVRKSSCKTRHSRSQ).

Interacts with apc2. Binds calmodulin.

The protein localises to the cytoplasm. Its subcellular location is the cytoskeleton. Functionally, required for normal renal development and establishment of left-right axis. Probably acts as a molecular switch between different Wnt signaling pathways. Inhibits the canonical Wnt pathway by targeting cytoplasmic disheveled for degradation by the ubiquitin-proteasome. This suggests that it is required in renal development to oppose the repression of terminal differentiation of tubular epithelial cells by Wnt signaling. Plays a central role in convergent extension movements in gastrulating embryos, a processus regulated by Wnt signaling. The chain is Inversin-B (invs-b) from Xenopus laevis (African clawed frog).